The sequence spans 209 residues: Protein phosphotransferase ChpT (209 aa).

His22 bears the Phosphohistidine mark.

The protein belongs to the ChpT phosphotransferase family. As to quaternary structure, homodimer. Forms an asymmetric heterotetramer with CtrA (2:2). There are at least two modes of interaction between ChpT and CtrA, only one of which is competent to catalyze His-Asp phosphoryl transfer. Is phosphorylated by CckA-P on His-22.

The protein localises to the cytoplasm. Its function is as follows. Component of a regulatory phosphorelay system that controls B.abortus cell growth, division, and intracellular survival inside mammalian host cells. This signaling pathway is composed of CckA, ChpT, CtrA and CpdR. ChpT efficiently and specifically shuttles phosphoryl groups from the CckA kinase to the receiver domains of both CtrA and CpdR. Does not bind ATP. Overexpression of chpT results in a defect in cell morphology, DNA content, and intracellular survival in human macrophages. The sequence is that of Protein phosphotransferase ChpT from Brucella abortus (strain 2308).